The following is a 47-amino-acid chain: Protein PsbN (47 aa).

Residues 7–29 (VAISISCLLISFTGYALYTAFGN) form a helical membrane-spanning segment.

It belongs to the PsbN family.

It localises to the plastid membrane. May play a role in photosystem I and II biogenesis. This chain is Protein PsbN, found in Aneura mirabilis (Parasitic liverwort).